The following is a 336-amino-acid chain: Phenylalanine--tRNA ligase alpha subunit (336 aa).

E263 contacts Mg(2+).

Belongs to the class-II aminoacyl-tRNA synthetase family. Phe-tRNA synthetase alpha subunit type 1 subfamily. As to quaternary structure, tetramer of two alpha and two beta subunits. Requires Mg(2+) as cofactor.

The protein resides in the cytoplasm. It catalyses the reaction tRNA(Phe) + L-phenylalanine + ATP = L-phenylalanyl-tRNA(Phe) + AMP + diphosphate + H(+). The sequence is that of Phenylalanine--tRNA ligase alpha subunit from Thermosynechococcus vestitus (strain NIES-2133 / IAM M-273 / BP-1).